Here is a 415-residue protein sequence, read N- to C-terminus: Gamma-glutamyl phosphate reductase (415 aa).

Belongs to the gamma-glutamyl phosphate reductase family.

The protein resides in the cytoplasm. It carries out the reaction L-glutamate 5-semialdehyde + phosphate + NADP(+) = L-glutamyl 5-phosphate + NADPH + H(+). It participates in amino-acid biosynthesis; L-proline biosynthesis; L-glutamate 5-semialdehyde from L-glutamate: step 2/2. Catalyzes the NADPH-dependent reduction of L-glutamate 5-phosphate into L-glutamate 5-semialdehyde and phosphate. The product spontaneously undergoes cyclization to form 1-pyrroline-5-carboxylate. This Cutibacterium acnes (strain DSM 16379 / KPA171202) (Propionibacterium acnes) protein is Gamma-glutamyl phosphate reductase.